The following is an 83-amino-acid chain: Hainantoxin-III 12 (83 aa).

The N-terminal stretch at 1 to 21 is a signal peptide; that stretch reads MKASMFLALAGLVLLFVVGYA. Positions 22–48 are excised as a propeptide; sequence SGSEEKEFPRELLSKIFAVDDFKGEER. 3 cysteine pairs are disulfide-bonded: cysteine 50–cysteine 65, cysteine 57–cysteine 70, and cysteine 64–cysteine 77. Leucine 81 is modified (leucine amide).

This sequence belongs to the neurotoxin 10 (Hwtx-1) family. 15 (Hntx-3) subfamily. In terms of assembly, monomer. As to expression, expressed by the venom gland.

The protein resides in the secreted. Selective antagonist of neuronal tetrodotoxin (TTX)-sensitive voltage-gated sodium channels (IC(50)=1270 nM on Nav1.1/SCN1A, 270 nM on Nav1.2/SCN2A, 491 nM on Nav1.3/SCN3A and 232 nM on Nav1.7/SCN9A). This toxin suppress Nav1.7 current amplitude without significantly altering the activation, inactivation, and repriming kinetics. Short extreme depolarizations partially activate the toxin-bound channel, indicating voltage-dependent inhibition of this toxin. This toxin increases the deactivation of the Nav1.7 current after extreme depolarizations. The toxin-Nav1.7 complex is gradually dissociated upon prolonged strong depolarizations in a voltage-dependent manner, and the unbound toxin rebinds to Nav1.7 after a long repolarization. Moreover, analysis of chimeric channels showed that the DIIS3-S4 linker is critical for toxin binding to Nav1.7. These data are consistent with this toxin interacting with Nav1.7 site 4 and trapping the domain II voltage sensor in the closed state. The polypeptide is Hainantoxin-III 12 (Cyriopagopus hainanus (Chinese bird spider)).